The chain runs to 202 residues: N-(5'-phosphoribosyl)anthranilate isomerase (202 aa).

It belongs to the TrpF family.

The catalysed reaction is N-(5-phospho-beta-D-ribosyl)anthranilate = 1-(2-carboxyphenylamino)-1-deoxy-D-ribulose 5-phosphate. It participates in amino-acid biosynthesis; L-tryptophan biosynthesis; L-tryptophan from chorismate: step 3/5. The chain is N-(5'-phosphoribosyl)anthranilate isomerase from Listeria monocytogenes serotype 4a (strain HCC23).